Consider the following 1025-residue polypeptide: Exportin-T (1025 aa).

It belongs to the exportin family.

It is found in the nucleus. The protein localises to the cytoplasm. In terms of biological role, tRNA nucleus export receptor which facilitates tRNA translocation across the nuclear pore complex. Involved in pre-tRNA splicing, probably by affecting the interaction of pre-tRNA with splicing endonuclease. This is Exportin-T (LOS1) from Candida albicans (strain SC5314 / ATCC MYA-2876) (Yeast).